A 137-amino-acid chain; its full sequence is uncharacterized protein (137 aa).

The region spanning 5-136 is the HTH marR-type domain; the sequence is NRHLIHQINQ…FSHLFRMFLQ (132 aa). Positions 51–74 form a DNA-binding region, H-T-H motif; it reads QKEIWSYLNVEAPTVTRTIKRLEE.

This is an uncharacterized protein from Bacillus subtilis (strain 168).